We begin with the raw amino-acid sequence, 291 residues long: Protease HtpX homolog (291 aa).

Helical transmembrane passes span 4 to 24 (VFLF…SARL) and 38 to 58 (MGML…ISLL). H144 lines the Zn(2+) pocket. The active site involves E145. Position 148 (H148) interacts with Zn(2+). Transmembrane regions (helical) follow at residues 159–179 (LIQG…AYAL) and 199–219 (ISSI…VMYF). E224 provides a ligand contact to Zn(2+).

The protein belongs to the peptidase M48B family. It depends on Zn(2+) as a cofactor.

The protein resides in the cell inner membrane. The chain is Protease HtpX homolog from Chlorobium phaeovibrioides (strain DSM 265 / 1930) (Prosthecochloris vibrioformis (strain DSM 265)).